The primary structure comprises 310 residues: Apolipoprotein E (310 aa).

The N-terminal stretch at 1–18 is a signal peptide; the sequence is MKALWAVLLATLLTGCLS. 8 repeat units span residues 72–93, 94–115, 116–137, 138–159, 160–181, 182–203, 204–225, and 226–247. The interval 72 to 247 is 8 X 22 AA approximate tandem repeats; that stretch reads VLMEDTMTEV…RLEEMREHME (176 aa). Methionine 135 carries the post-translational modification Methionine sulfoxide. The interval 150 to 160 is LDL and other lipoprotein receptors binding; the sequence is HLRKMRKRLMR. An LDL receptor binding region spans residues 150 to 160; the sequence is HLRKMRKRLMR. 154–157 serves as a coordination point for heparin; that stretch reads MRKR. The interval 202–282 is lipid-binding and lipoprotein association; the sequence is TANLGAGVAQ…GWFEPLVEDM (81 aa). 221 to 228 serves as a coordination point for heparin; it reads GDRLRGRL. A homooligomerization region spans residues 258–310; it reads QQIRLQAEIFQARLKGWFEPLVEDMQRQLANLVEKIQASTNSVLSTSVPQENQ. Positions 270 to 282 are specificity for association with VLDL; sequence RLKGWFEPLVEDM.

This sequence belongs to the apolipoprotein A1/A4/E family. Homotetramer. May interact with ABCA1; functionally associated with ABCA1 in the biogenesis of HDLs. May interact with APP/A4 amyloid-beta peptide; the interaction is extremely stable in vitro but its physiological significance is unclear. May interact with MAPT. May interact with MAP2. In the cerebrospinal fluid, interacts with secreted SORL1. Interacts with PMEL; this allows the loading of PMEL luminal fragment on ILVs to induce fibril nucleation. In terms of processing, APOE exists as multiple glycosylated and sialylated glycoforms within cells and in plasma. The extent of glycosylation and sialylation are tissue and context specific. Post-translationally, glycated in plasma VLDL. Phosphorylated by FAM20C in the extracellular medium.

Its subcellular location is the secreted. It localises to the extracellular space. The protein localises to the extracellular matrix. It is found in the extracellular vesicle. The protein resides in the endosome. Its subcellular location is the multivesicular body. In terms of biological role, APOE is an apolipoprotein, a protein associating with lipid particles, that mainly functions in lipoprotein-mediated lipid transport between organs via the plasma and interstitial fluids. APOE is a core component of plasma lipoproteins and is involved in their production, conversion and clearance. Apolipoproteins are amphipathic molecules that interact both with lipids of the lipoprotein particle core and the aqueous environment of the plasma. As such, APOE associates with chylomicrons, chylomicron remnants, very low density lipoproteins (VLDL) and intermediate density lipoproteins (IDL) but shows a preferential binding to high-density lipoproteins (HDL). It also binds a wide range of cellular receptors including the LDL receptor/LDLR, the LDL receptor-related proteins LRP1, LRP2 and LRP8 and the very low-density lipoprotein receptor/VLDLR that mediate the cellular uptake of the APOE-containing lipoprotein particles. Finally, APOE also has a heparin-binding activity and binds heparan-sulfate proteoglycans on the surface of cells, a property that supports the capture and the receptor-mediated uptake of APOE-containing lipoproteins by cells. A main function of APOE is to mediate lipoprotein clearance through the uptake of chylomicrons, VLDLs, and HDLs by hepatocytes. APOE is also involved in the biosynthesis by the liver of VLDLs as well as their uptake by peripheral tissues ensuring the delivery of triglycerides and energy storage in muscle, heart and adipose tissues. By participating in the lipoprotein-mediated distribution of lipids among tissues, APOE plays a critical role in plasma and tissues lipid homeostasis. APOE is also involved in two steps of reverse cholesterol transport, the HDLs-mediated transport of cholesterol from peripheral tissues to the liver, and thereby plays an important role in cholesterol homeostasis. First, it is functionally associated with ABCA1 in the biogenesis of HDLs in tissues. Second, it is enriched in circulating HDLs and mediates their uptake by hepatocytes. APOE also plays an important role in lipid transport in the central nervous system, regulating neuron survival and sprouting. The chain is Apolipoprotein E (Apoe) from Grammomys surdaster (African woodland thicket rat).